Here is a 591-residue protein sequence, read N- to C-terminus: Formate--tetrahydrofolate ligase (591 aa).

An ATP-binding site is contributed by 74 to 81 (TPLGEGKS).

Belongs to the formate--tetrahydrofolate ligase family.

It catalyses the reaction (6S)-5,6,7,8-tetrahydrofolate + formate + ATP = (6R)-10-formyltetrahydrofolate + ADP + phosphate. The protein operates within one-carbon metabolism; tetrahydrofolate interconversion. The protein is Formate--tetrahydrofolate ligase of Desulforapulum autotrophicum (strain ATCC 43914 / DSM 3382 / VKM B-1955 / HRM2) (Desulfobacterium autotrophicum).